A 184-amino-acid chain; its full sequence is ATP synthase subunit b, chloroplastic (184 aa).

A helical membrane pass occupies residues 29-49; sequence TNLINLGVVLGLLVYFGKGVL.

Belongs to the ATPase B chain family. As to quaternary structure, F-type ATPases have 2 components, F(1) - the catalytic core - and F(0) - the membrane proton channel. F(1) has five subunits: alpha(3), beta(3), gamma(1), delta(1), epsilon(1). F(0) has four main subunits: a(1), b(1), b'(1) and c(10-14). The alpha and beta chains form an alternating ring which encloses part of the gamma chain. F(1) is attached to F(0) by a central stalk formed by the gamma and epsilon chains, while a peripheral stalk is formed by the delta, b and b' chains.

Its subcellular location is the plastid. The protein resides in the chloroplast thylakoid membrane. F(1)F(0) ATP synthase produces ATP from ADP in the presence of a proton or sodium gradient. F-type ATPases consist of two structural domains, F(1) containing the extramembraneous catalytic core and F(0) containing the membrane proton channel, linked together by a central stalk and a peripheral stalk. During catalysis, ATP synthesis in the catalytic domain of F(1) is coupled via a rotary mechanism of the central stalk subunits to proton translocation. Its function is as follows. Component of the F(0) channel, it forms part of the peripheral stalk, linking F(1) to F(0). In Anthoceros angustus (Hornwort), this protein is ATP synthase subunit b, chloroplastic.